The chain runs to 391 residues: RNA-binding motif protein, X chromosome (391 aa).

At methionine 1 the chain carries N-acetylmethionine; in Heterogeneous nuclear ribonucleoprotein G; alternate. Valine 2 bears the N-acetylvaline; in Heterogeneous nuclear ribonucleoprotein G, N-terminally processed mark. The region spanning 8-86 is the RRM domain; it reads GKLFIGGLNT…KAIKVEQATK (79 aa). Lysine 22 participates in a covalent cross-link: Glycyl lysine isopeptide (Lys-Gly) (interchain with G-Cter in SUMO2). At lysine 30 the chain carries N6-acetyllysine. Residues 61-80 are compositionally biased toward basic and acidic residues; the sequence is DAKDAARDMNGKSLDGKAIK. The disordered stretch occupies residues 61 to 391; sequence DAKDAARDMN…SDRGGGRSRY (331 aa). Glycyl lysine isopeptide (Lys-Gly) (interchain with G-Cter in SUMO2) cross-links involve residues lysine 80 and lysine 86. A phosphoserine mark is found at serine 88 and serine 91. A compositionally biased stretch (gly residues) spans 109–120; it reads LRGGRGGSGGTR. An omega-N-methylarginine mark is found at arginine 125, arginine 144, and arginine 164. A compositionally biased stretch (pro residues) spans 151 to 164; it reads RGPPPRSGGPPPKR. The residue at position 165 (serine 165) is a Phosphoserine. Arginine 172 carries the post-translational modification Omega-N-methylarginine. Serine 174 is modified (phosphoserine). Residues 186-236 form a necessary for the association to nascent RNAPII transcripts and nuclear localization region; it reads GRDSYGGPPRREPLPSRRDVYLSPRDDGYSTKDSYSSRDYPSSRDTRDYAP. 2 stretches are compositionally biased toward basic and acidic residues: residues 194 to 215 and 241 to 274; these read PRRE…DGYS and YTYR…DYSD. A phosphoserine mark is found at serine 261, serine 328, serine 329, serine 330, and serine 332. Residues 323–337 are compositionally biased toward low complexity; that stretch reads SRDSYSSSRSDLYSS. The interval 333–391 is necessary for RNA-binding; sequence DLYSSGRDRVGRQERGLPPSMERGYPPPRDSYSSSSRGAPRGGGRGGSRSDRGGGRSRY. Basic and acidic residues predominate over residues 338–347; that stretch reads GRDRVGRQER. Serine 352 bears the Phosphoserine mark. Residues 362–371 are compositionally biased toward low complexity; the sequence is DSYSSSSRGA. Residues 380 to 391 show a composition bias toward basic and acidic residues; that stretch reads SRSDRGGGRSRY.

As to quaternary structure, homomultimer. Found in the supraspliceosome complex. Identified in the spliceosome C complex. Forms a complex with ILF2, ILF3, YLPM1, KHDRBS1, NCOA5 and PPP1CA. Interacts with CLK2, KHDRBS2, KHDRBS3, SAFB/SAFB1, TRA2B and YTHDC1. Interacts with ERAP1; the interaction is RNA-independent. Interacts with PPIA/CYPA. Post-translationally, O-glycosylated. Arg-185 is dimethylated, probably to asymmetric dimethylarginine.

Its subcellular location is the nucleus. RNA-binding protein that plays several role in the regulation of pre- and post-transcriptional processes. Implicated in tissue-specific regulation of gene transcription and alternative splicing of several pre-mRNAs. Binds to and stimulates transcription from the tumor suppressor TXNIP gene promoter; may thus be involved in tumor suppression. When associated with SAFB, binds to and stimulates transcription from the SREBF1 promoter. Associates with nascent mRNAs transcribed by RNA polymerase II. Component of the supraspliceosome complex that regulates pre-mRNA alternative splice site selection. Can either activate or suppress exon inclusion; acts additively with TRA2B to promote exon 7 inclusion of the survival motor neuron SMN2. Represses the splicing of MAPT/Tau exon 10. Binds preferentially to single-stranded 5'-CC[A/C]-rich RNA sequence motifs localized in a single-stranded conformation; probably binds RNA as a homodimer. Binds non-specifically to pre-mRNAs. Also plays a role in the cytoplasmic TNFR1 trafficking pathways; promotes both the IL-1-beta-mediated inducible proteolytic cleavage of TNFR1 ectodomains and the release of TNFR1 exosome-like vesicles to the extracellular compartment. In Pan troglodytes (Chimpanzee), this protein is RNA-binding motif protein, X chromosome (RBMX).